A 251-amino-acid polypeptide reads, in one-letter code: Hydroxyacylglutathione hydrolase (251 aa).

Zn(2+) is bound by residues His53, His55, Asp57, His58, His110, Asp127, and His165.

It belongs to the metallo-beta-lactamase superfamily. Glyoxalase II family. Monomer. It depends on Zn(2+) as a cofactor.

It catalyses the reaction an S-(2-hydroxyacyl)glutathione + H2O = a 2-hydroxy carboxylate + glutathione + H(+). It functions in the pathway secondary metabolite metabolism; methylglyoxal degradation; (R)-lactate from methylglyoxal: step 2/2. In terms of biological role, thiolesterase that catalyzes the hydrolysis of S-D-lactoyl-glutathione to form glutathione and D-lactic acid. The polypeptide is Hydroxyacylglutathione hydrolase (Salmonella gallinarum (strain 287/91 / NCTC 13346)).